Consider the following 207-residue polypeptide: Thiamine-phosphate synthase (207 aa).

4-amino-2-methyl-5-(diphosphooxymethyl)pyrimidine contacts are provided by residues 37 to 41 (QLREK) and asparagine 69. The Mg(2+) site is built by aspartate 70 and aspartate 89. A 4-amino-2-methyl-5-(diphosphooxymethyl)pyrimidine-binding site is contributed by serine 108. 134 to 136 (TGS) lines the 2-[(2R,5Z)-2-carboxy-4-methylthiazol-5(2H)-ylidene]ethyl phosphate pocket. Lysine 137 lines the 4-amino-2-methyl-5-(diphosphooxymethyl)pyrimidine pocket. 2-[(2R,5Z)-2-carboxy-4-methylthiazol-5(2H)-ylidene]ethyl phosphate-binding positions include glycine 165 and 185–186 (IS).

The protein belongs to the thiamine-phosphate synthase family. The cofactor is Mg(2+).

It carries out the reaction 2-[(2R,5Z)-2-carboxy-4-methylthiazol-5(2H)-ylidene]ethyl phosphate + 4-amino-2-methyl-5-(diphosphooxymethyl)pyrimidine + 2 H(+) = thiamine phosphate + CO2 + diphosphate. The catalysed reaction is 2-(2-carboxy-4-methylthiazol-5-yl)ethyl phosphate + 4-amino-2-methyl-5-(diphosphooxymethyl)pyrimidine + 2 H(+) = thiamine phosphate + CO2 + diphosphate. It catalyses the reaction 4-methyl-5-(2-phosphooxyethyl)-thiazole + 4-amino-2-methyl-5-(diphosphooxymethyl)pyrimidine + H(+) = thiamine phosphate + diphosphate. It functions in the pathway cofactor biosynthesis; thiamine diphosphate biosynthesis; thiamine phosphate from 4-amino-2-methyl-5-diphosphomethylpyrimidine and 4-methyl-5-(2-phosphoethyl)-thiazole: step 1/1. In terms of biological role, condenses 4-methyl-5-(beta-hydroxyethyl)thiazole monophosphate (THZ-P) and 2-methyl-4-amino-5-hydroxymethyl pyrimidine pyrophosphate (HMP-PP) to form thiamine monophosphate (TMP). The chain is Thiamine-phosphate synthase from Desulfitobacterium hafniense (strain Y51).